The following is a 369-amino-acid chain: 3 beta-hydroxysteroid dehydrogenase type 7 (369 aa).

Tyr159 acts as the Proton acceptor in catalysis. Lys163 is a binding site for NAD(+). Transmembrane regions (helical) follow at residues 289-309 (LLPYWLLVLLATLNALLQWLL) and 312-334 (LVLYTPLLNPYTLAMANTTFTVS).

It belongs to the 3-beta-HSD family. As to expression, predominantly expressed in liver.

It localises to the endoplasmic reticulum membrane. The enzyme catalyses 7alpha-hydroxycholesterol + NAD(+) = 7alpha-hydroxycholest-4-en-3-one + NADH + H(+). It carries out the reaction 7alpha,25-dihydroxycholesterol + NAD(+) = 7alpha,25-dihydroxy-4-cholesten-3-one + NADH + H(+). It catalyses the reaction (25R)-cholest-5-en-3beta,7alpha,26-triol + NAD(+) = (25R)-7alpha,26-dihydroxycholest-4-en-3-one + NADH + H(+). The catalysed reaction is (24S)-7alpha-dihydroxycholesterol + NAD(+) = (24S)-7alpha,24-dihydroxycholest-4-en-3-one + NADH + H(+). Its pathway is lipid metabolism; steroid biosynthesis. In terms of biological role, the 3-beta-HSD enzymatic system plays a crucial role in the biosynthesis of all classes of hormonal steroids. HSD VII is active against four 7-alpha-hydroxylated sterols. Does not metabolize several different C(19/21) steroids as substrates. Involved in bile acid synthesis. Plays a key role in cell positioning and movement in lymphoid tissues by mediating degradation of 7-alpha,25-dihydroxycholesterol (7-alpha,25-OHC): 7-alpha,25-OHC acts as a ligand for the G protein-coupled receptor GPR183/EBI2, a chemotactic receptor for a number of lymphoid cells. The polypeptide is 3 beta-hydroxysteroid dehydrogenase type 7 (Mus musculus (Mouse)).